A 117-amino-acid polypeptide reads, in one-letter code: Large ribosomal subunit protein bL19 (117 aa).

Belongs to the bacterial ribosomal protein bL19 family.

Its function is as follows. This protein is located at the 30S-50S ribosomal subunit interface and may play a role in the structure and function of the aminoacyl-tRNA binding site. The protein is Large ribosomal subunit protein bL19 of Shewanella denitrificans (strain OS217 / ATCC BAA-1090 / DSM 15013).